We begin with the raw amino-acid sequence, 322 residues long: MSGERAKRFPLALEDLKREPRKPEGRVAERQAAGDAARQRLTAAAAVPAAASPIVPERRAPHGGVFAANPARAKQHAPAAPGAAKRAPQGGAKQGDRSAAPNVALSGALALTSERVRERMVERLRANGVADPRVLAAMSAVPRHMFVDPGLAAQAYEDAALPIGHQQTISKPSVVARMIELAAAGRALERVLEIGTGCGYQAAVLSRVARDVYSIERVKPLYERAKLNLRPLRVPNIRLHYGDGRVGLPAAAPFDAIVIAAAGLDVPRALLEQLAIGGRLVAPVGEQAGEQVLTLVERVAPAQWRESRLDRVFFVPLKSGVI.

The disordered stretch occupies residues 1 to 101 (MSGERAKRFP…AKQGDRSAAP (101 aa)). The span at 14–29 (EDLKREPRKPEGRVAE) shows a compositional bias: basic and acidic residues. 2 stretches are compositionally biased toward low complexity: residues 33-51 (AGDAARQRLTAAAAVPAAA) and 67-91 (AANPARAKQHAPAAPGAAKRAPQGG). S170 is a catalytic residue.

The protein belongs to the methyltransferase superfamily. L-isoaspartyl/D-aspartyl protein methyltransferase family.

The protein localises to the cytoplasm. It catalyses the reaction [protein]-L-isoaspartate + S-adenosyl-L-methionine = [protein]-L-isoaspartate alpha-methyl ester + S-adenosyl-L-homocysteine. In terms of biological role, catalyzes the methyl esterification of L-isoaspartyl residues in peptides and proteins that result from spontaneous decomposition of normal L-aspartyl and L-asparaginyl residues. It plays a role in the repair and/or degradation of damaged proteins. The protein is Protein-L-isoaspartate O-methyltransferase of Burkholderia pseudomallei (strain 668).